Reading from the N-terminus, the 291-residue chain is 4-diphosphocytidyl-2-C-methyl-D-erythritol kinase (291 aa).

Lys10 is a catalytic residue. 99–109 (PMGGGLGGGSS) contributes to the ATP binding site. Residue Asp141 is part of the active site.

The protein belongs to the GHMP kinase family. IspE subfamily. Homodimer.

It catalyses the reaction 4-CDP-2-C-methyl-D-erythritol + ATP = 4-CDP-2-C-methyl-D-erythritol 2-phosphate + ADP + H(+). Its pathway is isoprenoid biosynthesis; isopentenyl diphosphate biosynthesis via DXP pathway; isopentenyl diphosphate from 1-deoxy-D-xylulose 5-phosphate: step 3/6. Its function is as follows. Catalyzes the phosphorylation of the position 2 hydroxy group of 4-diphosphocytidyl-2C-methyl-D-erythritol. The sequence is that of 4-diphosphocytidyl-2-C-methyl-D-erythritol kinase from Proteus mirabilis (strain HI4320).